The primary structure comprises 530 residues: Estrogen receptor beta (530 aa).

The interval 1–148 (MDIKNSPSSL…GPSSKRDAHF (148 aa)) is modulating. The residue at position 61 (S61) is a Phosphoserine; alternate. S61 carries an O-linked (GlcNAc) serine; alternate glycan. A phosphoserine; by MAPK mark is found at S87 and S105. 2 consecutive NR C4-type zinc fingers follow at residues 149-169 (CAVCSDYASGYHYGVWSCEGC) and 185-209 (CPATNQCTIDKNRRKSCQACRLRKC). The nuclear receptor DNA-binding region spans 149–214 (CAVCSDYASG…RLRKCYEVGM (66 aa)). The NR LBD domain maps to 264-498 (SPEQLVLTLL…DLLLEMMNAH (235 aa)). The segment at 507–530 (ITGSECSPAEDSKSTEGSQNPQSP) is disordered. Residues 521–530 (TEGSQNPQSP) show a composition bias toward polar residues.

Belongs to the nuclear hormone receptor family. NR3 subfamily. Binds DNA as a homodimer. Can form a heterodimer with ESR1. Interacts with NCOA1, NCOA3, NCOA5 and NCOA6 coactivators, leading to a strong increase of transcription of target genes. Interacts with UBE1C and AKAP13. Interacts with DNTTIP2. Interacts with CCDC62 in the presence of estradiol/E2; this interaction seems to enhance the transcription of target genes. Interacts with DNAAF4. Interacts with PRMT2. Interacts with CCAR2 (via N-terminus) in a ligand-independent manner. Interacts with RBM39, in the presence of estradiol (E2). Interacts with STUB1/CHIP. In terms of processing, phosphorylation at Ser-87 and Ser-105 recruits NCOA1.

The protein resides in the nucleus. Functionally, nuclear hormone receptor. Binds estrogens with an affinity similar to that of ESR1/ER-alpha, and activates expression of reporter genes containing estrogen response elements (ERE) in an estrogen-dependent manner. This chain is Estrogen receptor beta (ESR2), found in Callithrix jacchus (White-tufted-ear marmoset).